The chain runs to 582 residues: Threonine--tRNA ligase (582 aa).

The interval 185-478 (DHRKLGKELE…LTEQYGGAFP (294 aa)) is catalytic. Residues cysteine 278, histidine 329, and histidine 455 each coordinate Zn(2+).

Belongs to the class-II aminoacyl-tRNA synthetase family. Homodimer. It depends on Zn(2+) as a cofactor.

It localises to the cytoplasm. The enzyme catalyses tRNA(Thr) + L-threonine + ATP = L-threonyl-tRNA(Thr) + AMP + diphosphate + H(+). In terms of biological role, catalyzes the attachment of threonine to tRNA(Thr) in a two-step reaction: L-threonine is first activated by ATP to form Thr-AMP and then transferred to the acceptor end of tRNA(Thr). Also edits incorrectly charged L-seryl-tRNA(Thr). In Dehalococcoides mccartyi (strain ATCC BAA-2266 / KCTC 15142 / 195) (Dehalococcoides ethenogenes (strain 195)), this protein is Threonine--tRNA ligase.